The following is a 299-amino-acid chain: Dihydroorotate dehydrogenase B (NAD(+)), catalytic subunit (299 aa).

Residues serine 19 and 43-44 (KS) each bind FMN. Substrate-binding positions include lysine 43, 67–71 (NAMGL), and asparagine 121. Position 121 (asparagine 121) interacts with FMN. The Nucleophile role is filled by cysteine 124. FMN is bound by residues lysine 159 and isoleucine 185. 186–187 (NT) contacts substrate. Residues glycine 211, 237–238 (GG), and 259–260 (GT) each bind FMN.

This sequence belongs to the dihydroorotate dehydrogenase family. Type 1 subfamily. In terms of assembly, heterotetramer of 2 PyrK and 2 PyrD type B subunits. FMN is required as a cofactor.

The protein resides in the cytoplasm. It catalyses the reaction (S)-dihydroorotate + NAD(+) = orotate + NADH + H(+). It functions in the pathway pyrimidine metabolism; UMP biosynthesis via de novo pathway; orotate from (S)-dihydroorotate (NAD(+) route): step 1/1. Its function is as follows. Catalyzes the conversion of dihydroorotate to orotate with NAD(+) as electron acceptor. The sequence is that of Dihydroorotate dehydrogenase B (NAD(+)), catalytic subunit (pyrD) from Pyrococcus abyssi (strain GE5 / Orsay).